A 559-amino-acid chain; its full sequence is MADGDYFAEAARAVGCPHAPVPGLGLGPPLGWKERLKAGLANSGSTLWFLAGLGLLYALRVPLRLCDNVTAVTGFLSSLTPKFYVALTGTSSLISGLIFIFEWWYFHKHGTSFIEQVSISHLRPLMGGTESSISEPGSPANSRESETLRHHHLSECKVWRNPLNLFRGAEYRRYTWVTGKEPLTYYDMNLSAQDHQTFFTCETDFLRPSDTVMQKAWRERNPPARIKAAYQALELNNDCATAYVLLAEEEATTIVDAERLFKQALRAGEIIYRRSQQCQHQSPQHEAQLRRDTNVLVYIKRRLAMCARKLGRIREAVKIMRDLMKEFPPLTMLNIHENLLESLLELQAYADVQAVLAKYDDISLPKSAAICYTAALLKTRTVSDKFSPETAFRKGLSTAEINAVEAIHRAVEFNPHVPKYLLEMKSLILPPEHILKRGDSEAIAYAFFHLQHWKRIEGALNLLQCTWEGTFRMIPYPLEKGHLFYPYPSCTETADRELLPTFHHVSVYPKKELPFFIHFTAGLCSSTAMLAFLTHQFPEVMGVFAKAVSMISRTCVEYL.

The next 3 helical transmembrane spans lie at 39-59 (GLAN…LYAL), 83-103 (FYVA…IFEW), and 513-533 (LPFF…LAFL).

It belongs to the ST7 family. Ubiquitously expressed.

It localises to the membrane. This is Suppressor of tumorigenicity 7 protein-like (St7l) from Mus musculus (Mouse).